We begin with the raw amino-acid sequence, 352 residues long: Cobalt transport protein NhlF (352 aa).

Helical transmembrane passes span 23-43, 46-66, 95-115, 131-151, 206-226, 230-250, 290-310, and 323-343; these read LASV…LYLG, GNPA…VLGV, VGFF…LVVA, EIGG…VAGL, PVGL…LLTL, AATG…LFAA, VIGL…LPMF, and FEFL…GALL.

The protein belongs to the NiCoT transporter (TC 2.A.52) family.

It is found in the cell membrane. Its activity is regulated as follows. Cobalt uptake is inhibited by uncouplers (CCCP and 3,5-di-tert-butyl-4-hydroxybenzylidenemalononitrile) and by the addition of excess nickel. Its function is as follows. Mediates energy-dependent uptake of cobalt ions into the cell. Can also transport nickel ions, but cobalt is the preferred substrate. The chain is Cobalt transport protein NhlF (nhlF) from Rhodococcus rhodochrous.